Consider the following 186-residue polypeptide: RNA-free ribonuclease P (186 aa).

The protein belongs to the HARP family.

The catalysed reaction is Endonucleolytic cleavage of RNA, removing 5'-extranucleotides from tRNA precursor.. Functionally, RNA-free RNase P that catalyzes the removal of the 5'-leader sequence from pre-tRNA to produce the mature 5'-terminus. The polypeptide is RNA-free ribonuclease P (Hydrogenobaculum sp. (strain Y04AAS1)).